The sequence spans 476 residues: tRNA(Ile)-lysidine synthase (476 aa).

26 to 31 (SGGSDS) is a binding site for ATP.

It belongs to the tRNA(Ile)-lysidine synthase family.

Its subcellular location is the cytoplasm. It catalyses the reaction cytidine(34) in tRNA(Ile2) + L-lysine + ATP = lysidine(34) in tRNA(Ile2) + AMP + diphosphate + H(+). In terms of biological role, ligates lysine onto the cytidine present at position 34 of the AUA codon-specific tRNA(Ile) that contains the anticodon CAU, in an ATP-dependent manner. Cytidine is converted to lysidine, thus changing the amino acid specificity of the tRNA from methionine to isoleucine. The chain is tRNA(Ile)-lysidine synthase from Bartonella quintana (strain Toulouse) (Rochalimaea quintana).